The primary structure comprises 76 residues: FMRFamide-related neuropeptides (76 aa).

Residues 1 to 27 (MCVQTRMLVAVAVVLVVLAVLSDPVSA) form the signal peptide. Residue Phe39 is modified to Phenylalanine amide.

The protein belongs to the FARP (FMRFamide related peptide) family. In terms of tissue distribution, olfactory lobe and accessory lobe, olfactory globular tract, olfactory lobe cells (at protein level). Widely distributed throughout nervous system.

Its subcellular location is the secreted. Its function is as follows. GYRKPPFNGSIF-amide may be involved in olfaction and contraction of hindgut. In Procambarus clarkii (Red swamp crayfish), this protein is FMRFamide-related neuropeptides.